We begin with the raw amino-acid sequence, 116 residues long: Histone H2B (116 aa).

Positions 1-11 (TSGKAAKKAGK) are enriched in basic residues. The disordered stretch occupies residues 1–25 (TSGKAAKKAGKAQKSITKGDKKKRK). An N6-acetyllysine mark is found at Lys4, Lys11, and Lys14. An O-linked (GlcNAc) serine glycan is attached at Ser103. A Glycyl lysine isopeptide (Lys-Gly) (interchain with G-Cter in ubiquitin) cross-link involves residue Lys111.

The nucleosome is a histone octamer containing two molecules each of H2A, H2B, H3 and H4 assembled in one H3-H4 heterotetramer and two H2A-H2B heterodimers. The octamer wraps approximately 147 bp of DNA. In terms of processing, monoubiquitination gives a specific tag for epigenetic transcriptional activation and is also prerequisite for histone H3 'Lys-4' and 'Lys-79' methylation. Post-translationally, glcNAcylation at Ser-103 promotes monoubiquitination of Lys-111. It fluctuates in response to extracellular glucose, and associates with transcribed genes.

The protein resides in the nucleus. It localises to the chromosome. Its function is as follows. Core component of nucleosome. Nucleosomes wrap and compact DNA into chromatin, limiting DNA accessibility to the cellular machineries which require DNA as a template. Histones thereby play a central role in transcription regulation, DNA repair, DNA replication and chromosomal stability. DNA accessibility is regulated via a complex set of post-translational modifications of histones, also called histone code, and nucleosome remodeling. A mixture of histones H2B and H4 has antimicrobial activity against the Gram-positive bacterium M.luteus. This Penaeus vannamei (Whiteleg shrimp) protein is Histone H2B.